Consider the following 900-residue polypeptide: Iodate reductase subunit IdrA (900 aa).

Positions 1 to 21 (MSENIKQGGAGTFMQAPQDSV) are disordered. C35, C38, and C42 together coordinate [3Fe-4S] cluster.

This sequence belongs to the prokaryotic molybdopterin-containing oxidoreductase family. As to quaternary structure, the iodate reductase (Idr) complex is composed of a molybdopterin-dependent iodate reductase (IdrA and IdrB subunits) and two associated peroxidases (IdrP1 and IdrP2). The cofactor is [3Fe-4S] cluster. It depends on Mo-bis(molybdopterin guanine dinucleotide) as a cofactor.

It is found in the periplasm. In terms of biological role, involved in iodate respiration. May accept electrons from cytochrome c551, and catalyze the reduction of iodate (IO(3)(-)) to produce the chemically unstable intermediate hypoiodous acid (HIO). This intermediate then undergoes abiotic disproportionation to yield two molecules of iodide (I(-)) and one molecule of iodate. The resultant iodate subsequently cycles back into the reductive pathway. The initial reduction of iodate may inadvertently produce low levels of incidental toxic H(2)O(2), which is detoxified by IdrP1 and IdrP2. The protein is Iodate reductase subunit IdrA of Denitromonas iodatirespirans.